The primary structure comprises 467 residues: Serine/threonine-protein kinase US3 homolog (467 aa).

Positions 64-155 are disordered; that stretch reads GPEVAPPART…PAGGVTREEA (92 aa). The segment covering 99-111 has biased composition (basic and acidic residues); sequence NERRAATGDEKES. The span at 117–144 shows a compositional bias: acidic residues; sequence NESESESESESESESGADDGDWDDDDDA. Residues 164–462 form the Protein kinase domain; sequence FRIIRRLTPG…AAELLEHPVF (299 aa). ATP-binding positions include 170–178 and lysine 194; that span reads LTPGSEGRV. Aspartate 279 acts as the Proton acceptor in catalysis.

It belongs to the protein kinase superfamily. Ser/Thr protein kinase family. In terms of processing, phosphorylated by UL13 homolog; this phosphorylation regulates subsequent phosphorylation of UL31 and UL34 homologs by US3. Autophosphorylated.

The protein resides in the host cytoplasm. Its subcellular location is the host nucleus. It carries out the reaction L-seryl-[protein] + ATP = O-phospho-L-seryl-[protein] + ADP + H(+). The enzyme catalyses L-threonyl-[protein] + ATP = O-phospho-L-threonyl-[protein] + ADP + H(+). Its function is as follows. Multifunctional serine/threonine kinase that plays a role in several processes including egress of virus particles from the nucleus, modulation of the actin cytoskeleton and inhibition of apoptosis. Phosphorylates UL31 and UL34 homologs, two critical regulators of capsid budding from nucleus to endoplasmic reticulum, thereby facilitating virion egress. Modulates and redistributes host components of the nuclear envelope, including LMNA, emerin/EMD and the nuclear matrix protein MATR3. Phosphorylates envelope glycoprotein B (gB), probably to direct it to the cell surface. Promotes virus intracellular spread by restructuring host cell cytoskeleton. Blocks host apoptosis to extend cell survival and allow efficient viral replication. Promotes viral gene expression by phosphorylating host HDAC2 to reduce viral genome silencing. The sequence is that of Serine/threonine-protein kinase US3 homolog from Bos taurus (Bovine).